Reading from the N-terminus, the 356-residue chain is S-adenosylmethionine:tRNA ribosyltransferase-isomerase (356 aa).

This sequence belongs to the QueA family. As to quaternary structure, monomer.

Its subcellular location is the cytoplasm. The enzyme catalyses 7-aminomethyl-7-carbaguanosine(34) in tRNA + S-adenosyl-L-methionine = epoxyqueuosine(34) in tRNA + adenine + L-methionine + 2 H(+). The protein operates within tRNA modification; tRNA-queuosine biosynthesis. Its function is as follows. Transfers and isomerizes the ribose moiety from AdoMet to the 7-aminomethyl group of 7-deazaguanine (preQ1-tRNA) to give epoxyqueuosine (oQ-tRNA). In Xanthomonas campestris pv. campestris (strain 8004), this protein is S-adenosylmethionine:tRNA ribosyltransferase-isomerase.